The sequence spans 79 residues: Sec-independent protein translocase protein TatA (79 aa).

Residues 1 to 21 traverse the membrane as a helical segment; the sequence is MGEFSLTHILLLAVIFLIFFG. The segment at 52-79 is disordered; it reads DIHDNQQVSHQNKQSMGQTQKQGENQNS. Over residues 56-79 the composition is skewed to polar residues; the sequence is NQQVSHQNKQSMGQTQKQGENQNS.

The protein belongs to the TatA/E family. As to quaternary structure, the Tat system comprises two distinct complexes: a TatABC complex, containing multiple copies of TatA, TatB and TatC subunits, and a separate TatA complex, containing only TatA subunits. Substrates initially bind to the TatABC complex, which probably triggers association of the separate TatA complex to form the active translocon.

The protein resides in the cell inner membrane. In terms of biological role, part of the twin-arginine translocation (Tat) system that transports large folded proteins containing a characteristic twin-arginine motif in their signal peptide across membranes. TatA could form the protein-conducting channel of the Tat system. This chain is Sec-independent protein translocase protein TatA, found in Bdellovibrio bacteriovorus (strain ATCC 15356 / DSM 50701 / NCIMB 9529 / HD100).